Here is a 258-residue protein sequence, read N- to C-terminus: Phosphate import ATP-binding protein PstB (258 aa).

Residues 5 to 247 (LDLKGVNIYY…EKIFSNPSQK (243 aa)) form the ABC transporter domain. An ATP-binding site is contributed by 37–44 (GPSGCGKT).

Belongs to the ABC transporter superfamily. Phosphate importer (TC 3.A.1.7) family. As to quaternary structure, the complex is composed of two ATP-binding proteins (PstB), two transmembrane proteins (PstC and PstA) and a solute-binding protein (PstS).

It is found in the cell membrane. The catalysed reaction is phosphate(out) + ATP + H2O = ADP + 2 phosphate(in) + H(+). Its function is as follows. Part of the ABC transporter complex PstSACB involved in phosphate import. Responsible for energy coupling to the transport system. The chain is Phosphate import ATP-binding protein PstB from Mycolicibacterium paratuberculosis (strain ATCC BAA-968 / K-10) (Mycobacterium paratuberculosis).